The primary structure comprises 31 residues: Cytochrome b6-f complex subunit 6 (31 aa).

A helical membrane pass occupies residues 4 to 26 (ITSYFGFLLAASTITPALLIGLS).

Belongs to the PetL family. In terms of assembly, the 4 large subunits of the cytochrome b6-f complex are cytochrome b6, subunit IV (17 kDa polypeptide, PetD), cytochrome f and the Rieske protein, while the 4 small subunits are PetG, PetL, PetM and PetN. The complex functions as a dimer.

The protein localises to the plastid. Its subcellular location is the chloroplast thylakoid membrane. Its function is as follows. Component of the cytochrome b6-f complex, which mediates electron transfer between photosystem II (PSII) and photosystem I (PSI), cyclic electron flow around PSI, and state transitions. PetL is important for photoautotrophic growth as well as for electron transfer efficiency and stability of the cytochrome b6-f complex. The chain is Cytochrome b6-f complex subunit 6 from Liriodendron tulipifera (Tuliptree).